A 157-amino-acid chain; its full sequence is uncharacterized protein (157 aa).

The N-acetyltransferase domain occupies 9-146; the sequence is LLINYKTLDE…GDFYVWHPET (138 aa).

This is an uncharacterized protein from Bacillus cereus (strain ATCC 10987 / NRS 248).